The primary structure comprises 266 residues: 3-oxoadipate enol-lactonase 1 (266 aa).

The region spanning 28-250 (PAIVFSNSLG…DASHLSNIEQ (223 aa)) is the AB hydrolase-1 domain.

The enzyme catalyses (4,5-dihydro-5-oxofuran-2-yl)-acetate + H2O = 3-oxoadipate + H(+). It functions in the pathway aromatic compound metabolism; beta-ketoadipate pathway; 3-oxoadipate from 5-oxo-4,5-dihydro-2-furylacetate: step 1/1. This is 3-oxoadipate enol-lactonase 1 (pcaD) from Acinetobacter baylyi (strain ATCC 33305 / BD413 / ADP1).